We begin with the raw amino-acid sequence, 119 residues long: Flagellar transcriptional regulator FlhD (119 aa).

This sequence belongs to the FlhD family. As to quaternary structure, homodimer; disulfide-linked. Forms a heterohexamer composed of two FlhC and four FlhD subunits. Each FlhC binds a FlhD dimer, forming a heterotrimer, and a hexamer assembles by dimerization of two heterotrimers.

It localises to the cytoplasm. Functionally, functions in complex with FlhC as a master transcriptional regulator that regulates transcription of several flagellar and non-flagellar operons by binding to their promoter region. Activates expression of class 2 flagellar genes, including fliA, which is a flagellum-specific sigma factor that turns on the class 3 genes. Also regulates genes whose products function in a variety of physiological pathways. This chain is Flagellar transcriptional regulator FlhD, found in Shigella boydii serotype 4 (strain Sb227).